The sequence spans 216 residues: Inactive ribonuclease-like protein 10 (216 aa).

The N-terminal stretch at 1–26 (MKLNLVQIFFMLLMLLLGLGMGLGLG) is a signal peptide. Residues 43-65 (EFWSSDSQDKAEATEEGDGTQTT) are disordered.

The protein belongs to the pancreatic ribonuclease family. In terms of processing, the N-terminus is blocked. Glycosylated.

The protein localises to the secreted. Secreted proximal epididymal protein required for post-testicular sperm maturation and male fertility. May be involved in sperm adhesion to the egg zona pellucida. Does not have ribonuclease activity. In Homo sapiens (Human), this protein is Inactive ribonuclease-like protein 10 (RNASE10).